The sequence spans 342 residues: Subtilisin-like serine protease Rho m 2.0101 (342 aa).

The propeptide at 1–30 (TMELLEDLIEQVRQLPMVNFIEKNSLVHAN) is removed in mature form. The region spanning 1-30 (TMELLEDLIEQVRQLPMVNFIEKNSLVHAN) is the Inhibitor I9 domain. A Peptidase S8 domain is found at 39 to 342 (PWGLARISHR…GQNLTKFWGH (304 aa)). Residues Asp75 and His107 each act as charge relay system in the active site. N-linked (GlcNAc...) asparagine glycosylation is found at Asn137 and Asn171. Ser267 serves as the catalytic Charge relay system. Asn335 carries N-linked (GlcNAc...) asparagine glycosylation.

It belongs to the peptidase S8 family.

In terms of biological role, serine protease. The chain is Subtilisin-like serine protease Rho m 2.0101 from Rhodotorula mucilaginosa (Yeast).